Reading from the N-terminus, the 60-residue chain is Large ribosomal subunit protein bL32 (60 aa).

The protein belongs to the bacterial ribosomal protein bL32 family.

This chain is Large ribosomal subunit protein bL32, found in Desulfovibrio desulfuricans (strain ATCC 27774 / DSM 6949 / MB).